A 316-amino-acid polypeptide reads, in one-letter code: KRR1 small subunit processome component (316 aa).

The region spanning 122-192 (ACDVIKIGNF…VRRVVEDCMK (71 aa)) is the KH domain. A compositionally biased stretch (basic and acidic residues) spans 279–304 (KKLNEQKEKQMEREIERQEERAKDFI). Positions 279-316 (KKLNEQKEKQMEREIERQEERAKDFIAPEEEAYKPNQN) are disordered.

The protein belongs to the KRR1 family. As to quaternary structure, component of the ribosomal small subunit (SSU) processome composed of at least 40 protein subunits and snoRNA U3. Interacts with snoRNA U3. Interacts with MPP10, KRI1 and with ribosomal proteins RPS1A, RPS4A, RPS4B, RPS8A, RPS8B, RPS11A, RPS11B, RPS13, RPS24, RPS25, RPL4A, RPL7B, RPL8, RPL23, RPL25 and RPL28.

It is found in the nucleus. Its subcellular location is the nucleolus. Required for 40S ribosome biogenesis. Involved in nucleolar processing of pre-18S ribosomal RNA and ribosome assembly. Essential for vegetative growth. This is KRR1 small subunit processome component from Saccharomyces cerevisiae (strain RM11-1a) (Baker's yeast).